Reading from the N-terminus, the 258-residue chain is MNTQTTPSPQFYLTAPAACPYLPHEMERKVFTHLVGPRAAEMNDILTQGGFRRSQNIAYRPACESCRACVSVRILAQEFEPTKSMKRVLAANSDVIATEFTAQPSSEQYSLFRRYLDFRHQQGGMSDMTVLDYAIMVEDTHVNTRIVEYRRREEGSGLEQRPTGELLAAALTDTMSDGLSMVYSYFNPDLERRSLGTFMILDHVRRAKALGLPHVYLGYWVQGSRKMDYKTRFQPQEHLTPRGWERFDPSSMPESPHD.

Belongs to the R-transferase family. Bpt subfamily.

The protein localises to the cytoplasm. The enzyme catalyses N-terminal L-glutamyl-[protein] + L-leucyl-tRNA(Leu) = N-terminal L-leucyl-L-glutamyl-[protein] + tRNA(Leu) + H(+). It carries out the reaction N-terminal L-aspartyl-[protein] + L-leucyl-tRNA(Leu) = N-terminal L-leucyl-L-aspartyl-[protein] + tRNA(Leu) + H(+). Functionally, functions in the N-end rule pathway of protein degradation where it conjugates Leu from its aminoacyl-tRNA to the N-termini of proteins containing an N-terminal aspartate or glutamate. This chain is Aspartate/glutamate leucyltransferase, found in Rhizobium leguminosarum bv. trifolii (strain WSM2304).